The primary structure comprises 276 residues: D-aminoacyl-tRNA deacylase (276 aa).

The protein belongs to the DtdA deacylase family. In terms of assembly, monomer. Requires Zn(2+) as cofactor.

The enzyme catalyses a D-aminoacyl-tRNA + H2O = a tRNA + a D-alpha-amino acid + H(+). It carries out the reaction glycyl-tRNA(Ala) + H2O = tRNA(Ala) + glycine + H(+). In terms of biological role, D-aminoacyl-tRNA deacylase with broad substrate specificity. By recycling D-aminoacyl-tRNA to D-amino acids and free tRNA molecules, this enzyme counteracts the toxicity associated with the formation of D-aminoacyl-tRNA entities in vivo. In Korarchaeum cryptofilum (strain OPF8), this protein is D-aminoacyl-tRNA deacylase.